We begin with the raw amino-acid sequence, 617 residues long: Protein fem-1 homolog A (617 aa).

7 ANK repeats span residues 2-32 (DISA…EERA), 40-70 (EGGT…NVAL), 82-111 (EGAP…PVNN), 115-144 (TNST…DLEV), 148-177 (HGHT…DVNR), 181-210 (KGNT…RMER), and 213-242 (YGMT…ASRE). 2 TPR repeats span residues 245–279 (IHAL…RWAG) and 339–372 (SYYI…QQSN). ANK repeat units lie at residues 482-524 (GGHT…DVDS) and 528-557 (DNNT…HFDA).

It belongs to the fem-1 family. As to quaternary structure, component of a CRL2 E3 ubiquitin-protein ligase complex, also named ECS (Elongin BC-CUL2/5-SOCS-box protein) complex.

It is found in the mitochondrion. Its subcellular location is the cytoplasm. Its pathway is protein modification; protein ubiquitination. Functionally, substrate-recognition component of a Cul2-RING (CRL2) E3 ubiquitin-protein ligase complex of the DesCEND (destruction via C-end degrons) pathway, which recognizes a C-degron located at the extreme C terminus of target proteins, leading to their ubiquitination and degradation. The C-degron recognized by the DesCEND pathway is usually a motif of less than ten residues and can be present in full-length proteins, truncated proteins or proteolytically cleaved forms. The CRL2(FEM1A) complex specifically recognizes proteins with an arginine at the C-terminus: recognizes and binds proteins ending with -Lys/Arg-Xaa-Arg and -Lys/Arg-Xaa-Xaa-Arg C-degrons, leading to their ubiquitination and degradation. The polypeptide is Protein fem-1 homolog A (Danio rerio (Zebrafish)).